The chain runs to 480 residues: Siroheme synthase (480 aa).

The interval 1–203 (MNYFPIFANL…QQTAQAEQEL (203 aa)) is precorrin-2 dehydrogenase /sirohydrochlorin ferrochelatase. NAD(+)-binding positions include 22-23 (SV) and 43-44 (NQ). S128 carries the phosphoserine modification. The interval 214–480 (GFVSLVGAGP…GGLNAGQRAA (267 aa)) is uroporphyrinogen-III C-methyltransferase. P223 serves as a coordination point for S-adenosyl-L-methionine. Residue D246 is the Proton acceptor of the active site. The active-site Proton donor is the K268. S-adenosyl-L-methionine is bound by residues 299–301 (GGD), V304, 329–330 (TA), M381, and G410.

It in the N-terminal section; belongs to the precorrin-2 dehydrogenase / sirohydrochlorin ferrochelatase family. This sequence in the C-terminal section; belongs to the precorrin methyltransferase family.

It catalyses the reaction uroporphyrinogen III + 2 S-adenosyl-L-methionine = precorrin-2 + 2 S-adenosyl-L-homocysteine + H(+). The catalysed reaction is precorrin-2 + NAD(+) = sirohydrochlorin + NADH + 2 H(+). It carries out the reaction siroheme + 2 H(+) = sirohydrochlorin + Fe(2+). It participates in cofactor biosynthesis; adenosylcobalamin biosynthesis; precorrin-2 from uroporphyrinogen III: step 1/1. It functions in the pathway cofactor biosynthesis; adenosylcobalamin biosynthesis; sirohydrochlorin from precorrin-2: step 1/1. Its pathway is porphyrin-containing compound metabolism; siroheme biosynthesis; precorrin-2 from uroporphyrinogen III: step 1/1. The protein operates within porphyrin-containing compound metabolism; siroheme biosynthesis; siroheme from sirohydrochlorin: step 1/1. It participates in porphyrin-containing compound metabolism; siroheme biosynthesis; sirohydrochlorin from precorrin-2: step 1/1. Functionally, multifunctional enzyme that catalyzes the SAM-dependent methylations of uroporphyrinogen III at position C-2 and C-7 to form precorrin-2 via precorrin-1. Then it catalyzes the NAD-dependent ring dehydrogenation of precorrin-2 to yield sirohydrochlorin. Finally, it catalyzes the ferrochelation of sirohydrochlorin to yield siroheme. In Neisseria meningitidis serogroup C (strain 053442), this protein is Siroheme synthase.